The chain runs to 467 residues: Chromosomal replication initiator protein DnaA (467 aa).

Residues 1-90 (MSLSLWQQCL…KSVTQTPQAA (90 aa)) form a domain I, interacts with DnaA modulators region. The segment at 91-130 (VTSNVAAPAQVAQTQPQRAAPSTRSGWDNVPAPAEPTYRS) is domain II. A compositionally biased stretch (low complexity) spans 97-111 (APAQVAQTQPQRAAP). The segment at 97–119 (APAQVAQTQPQRAAPSTRSGWDN) is disordered. Positions 131–347 (NVNVKHTFDN…GALNRVIANA (217 aa)) are domain III, AAA+ region. Gly175, Gly177, Lys178, and Thr179 together coordinate ATP. Residues 348 to 467 (NFTGRAITID…FSNLIRTLSS (120 aa)) form a domain IV, binds dsDNA region.

The protein belongs to the DnaA family. Oligomerizes as a right-handed, spiral filament on DNA at oriC.

Its subcellular location is the cytoplasm. Plays an essential role in the initiation and regulation of chromosomal replication. ATP-DnaA binds to the origin of replication (oriC) to initiate formation of the DNA replication initiation complex once per cell cycle. Binds the DnaA box (a 9 base pair repeat at the origin) and separates the double-stranded (ds)DNA. Forms a right-handed helical filament on oriC DNA; dsDNA binds to the exterior of the filament while single-stranded (ss)DNA is stabiized in the filament's interior. The ATP-DnaA-oriC complex binds and stabilizes one strand of the AT-rich DNA unwinding element (DUE), permitting loading of DNA polymerase. After initiation quickly degrades to an ADP-DnaA complex that is not apt for DNA replication. Binds acidic phospholipids. This Escherichia coli O157:H7 protein is Chromosomal replication initiator protein DnaA.